Here is a 233-residue protein sequence, read N- to C-terminus: LOB domain-containing protein 40 (233 aa).

In terms of domain architecture, LOB spans 3-109 (MSCNGCRVLR…VEAVMRGSPV (107 aa)). Basic and acidic residues predominate over residues 143–160 (KRRSRGACKEERNVRSLS). The segment at 143-183 (KRRSRGACKEERNVRSLSHESSLSHESPVSSEETTTEEPKT) is disordered. The span at 161 to 175 (HESSLSHESPVSSEE) shows a compositional bias: low complexity.

It belongs to the LOB domain-containing protein family. In terms of tissue distribution, expressed in roots and flowers.

This is LOB domain-containing protein 40 (LBD40) from Arabidopsis thaliana (Mouse-ear cress).